We begin with the raw amino-acid sequence, 66 residues long: Large ribosomal subunit protein bL33c (66 aa).

This sequence belongs to the bacterial ribosomal protein bL33 family.

The protein localises to the plastid. The protein resides in the chloroplast. This chain is Large ribosomal subunit protein bL33c, found in Cicer arietinum (Chickpea).